The chain runs to 183 residues: Small ribosomal subunit protein bS16 (183 aa).

Basic and acidic residues predominate over residues glutamate 149–alanine 161. Residues glutamate 149–alanine 183 are disordered. Low complexity predominate over residues glutamate 162–alanine 183.

The protein belongs to the bacterial ribosomal protein bS16 family.

The chain is Small ribosomal subunit protein bS16 from Phocaeicola vulgatus (strain ATCC 8482 / DSM 1447 / JCM 5826 / CCUG 4940 / NBRC 14291 / NCTC 11154) (Bacteroides vulgatus).